A 141-amino-acid chain; its full sequence is Hemoglobin subunit alpha (141 aa).

The region spanning 1–141 is the Globin domain; that stretch reads VLSPGDKSNI…VSTVLTSKYR (141 aa). The residue at position 3 (S3) is a Phosphoserine. N6-succinyllysine occurs at positions 7 and 11. K16 is modified (N6-acetyllysine; alternate). K16 is modified (N6-succinyllysine; alternate). At Y24 the chain carries Phosphotyrosine. At S35 the chain carries Phosphoserine. K40 carries the N6-succinyllysine modification. S49 is modified (phosphoserine). An O2-binding site is contributed by H58. H87 is a binding site for heme b. S102 carries the phosphoserine modification. A Phosphothreonine modification is found at T108. S124 is subject to Phosphoserine. A phosphothreonine mark is found at T134 and T137. A Phosphoserine modification is found at S138.

This sequence belongs to the globin family. As to quaternary structure, heterotetramer of two alpha chains and two beta chains. As to expression, red blood cells.

In terms of biological role, involved in oxygen transport from the lung to the various peripheral tissues. Hemopressin acts as an antagonist peptide of the cannabinoid receptor CNR1. Hemopressin-binding efficiently blocks cannabinoid receptor CNR1 and subsequent signaling. The polypeptide is Hemoglobin subunit alpha (HBA) (Tupaia glis (Common tree shrew)).